The sequence spans 176 residues: Probable inosine/xanthosine triphosphatase (176 aa).

Asp36 lines the Mg(2+) pocket.

It belongs to the YjjX NTPase family. As to quaternary structure, homodimer. The cofactor is Mg(2+). Requires Mn(2+) as cofactor.

It catalyses the reaction XTP + H2O = XDP + phosphate + H(+). It carries out the reaction ITP + H2O = IDP + phosphate + H(+). Its function is as follows. Phosphatase that hydrolyzes non-canonical purine nucleotides such as XTP and ITP to their respective diphosphate derivatives. Probably excludes non-canonical purines from DNA/RNA precursor pool, thus preventing their incorporation into DNA/RNA and avoiding chromosomal lesions. This is Probable inosine/xanthosine triphosphatase from Saccharolobus solfataricus (strain ATCC 35092 / DSM 1617 / JCM 11322 / P2) (Sulfolobus solfataricus).